Reading from the N-terminus, the 391-residue chain is Probable acridone synthase 4 (391 aa).

The active site involves cysteine 164.

This sequence belongs to the thiolase-like superfamily. Chalcone/stilbene synthases family.

The enzyme catalyses N-methylanthraniloyl-CoA + 3 malonyl-CoA + 3 H(+) = 1,3-dihydroxy-N-methylacridone + 3 CO2 + 4 CoA + H2O. The protein is Probable acridone synthase 4 (ACS4) of Ruta graveolens (Common rue).